The following is a 196-amino-acid chain: Phosphoheptose isomerase (196 aa).

The SIS domain maps to M36 to E196. N51–G53 lines the substrate pocket. The Zn(2+) site is built by H60 and E64. Substrate contacts are provided by residues E64, N93–D94, S119–S121, S124, and Q174. Zn(2+) is bound by residues Q174 and H182.

The protein belongs to the SIS family. GmhA subfamily. Homotetramer. Requires Zn(2+) as cofactor.

The protein localises to the cytoplasm. It catalyses the reaction 2 D-sedoheptulose 7-phosphate = D-glycero-alpha-D-manno-heptose 7-phosphate + D-glycero-beta-D-manno-heptose 7-phosphate. It functions in the pathway carbohydrate biosynthesis; D-glycero-D-manno-heptose 7-phosphate biosynthesis; D-glycero-alpha-D-manno-heptose 7-phosphate and D-glycero-beta-D-manno-heptose 7-phosphate from sedoheptulose 7-phosphate: step 1/1. Catalyzes the isomerization of sedoheptulose 7-phosphate in D-glycero-D-manno-heptose 7-phosphate. The polypeptide is Phosphoheptose isomerase (Dechloromonas aromatica (strain RCB)).